We begin with the raw amino-acid sequence, 229 residues long: Lytic polysaccharide monooxygenase-like protein ham-7 (229 aa).

The N-terminal stretch at 1–17 is a signal peptide; sequence MLTSTLLALASAALASA. His-18 contributes to the Cu(2+) binding site. 2 disulfide bridges follow: Cys-47–Cys-157 and Cys-122–Cys-178. 5 N-linked (GlcNAc...) asparagine glycosylation sites follow: Asn-55, Asn-98, Asn-139, Asn-174, and Asn-180. Ser-206 carries GPI-anchor amidated serine lipidation. Positions 207–229 are cleaved as a propeptide — removed in mature form; sequence AAASLARMAGWVPLVAGGLWLML.

Belongs to the X325 family. Requires Cu(2+) as cofactor.

The protein resides in the cell membrane. Lytic polysaccharide monooxygenase-like protein that has diverged to biological functions other than polysaccharide degradation since it does not perform oxidative cleavage of polysaccharides. Acts as the major cell wall sensor that regulates MAK-1-dependent hyphal anastomosis, the fusion of hyphal cells. May also act as a cell surface-bound protein that functions in the copper-accumulation pathway. In Neurospora crassa (strain ATCC 24698 / 74-OR23-1A / CBS 708.71 / DSM 1257 / FGSC 987), this protein is Lytic polysaccharide monooxygenase-like protein ham-7.